Reading from the N-terminus, the 565-residue chain is NAD-dependent malic enzyme (565 aa).

The active-site Proton donor is Tyr-104. Arg-157 is an NAD(+) binding site. Residue Lys-175 is the Proton acceptor of the active site. Glu-246, Asp-247, and Asp-270 together coordinate a divalent metal cation. NAD(+) contacts are provided by Asp-270 and Asn-418.

It belongs to the malic enzymes family. In terms of assembly, homotetramer. The cofactor is Mg(2+). Mn(2+) serves as cofactor.

The enzyme catalyses (S)-malate + NAD(+) = pyruvate + CO2 + NADH. The catalysed reaction is oxaloacetate + H(+) = pyruvate + CO2. This Photorhabdus laumondii subsp. laumondii (strain DSM 15139 / CIP 105565 / TT01) (Photorhabdus luminescens subsp. laumondii) protein is NAD-dependent malic enzyme.